We begin with the raw amino-acid sequence, 235 residues long: Golgi to ER traffic protein 1 (235 aa).

A topological domain (lumenal) is located at residue Met1. A helical transmembrane segment spans residues 2–21 (HWAAAVAIFFIVVTKFLQYT). Residues 22–104 (NKYHEKWISK…AFQAHLHKLR (83 aa)) lie on the Cytoplasmic side of the membrane. Positions 68 to 104 (WTKNNRKLDSLDKEINNLKDEIQSENKAFQAHLHKLR) form a coiled coil. Residues 105-125 (LLALTVPFFVFKIMYGKTPVY) traverse the membrane as a helical segment. At 126 to 181 (KLSSSTSTLFPTFVSGVWSQGWLYVLLHPLRTISQKWHIMEGKFGASKFDDMALQS) the chain is on the lumenal side. The chain crosses the membrane as a helical span at residues 182-198 (VSLGIWVWALMNVINGV). Residues 199-235 (EFIVKQLFLTPKMEAPASVETQEEKALDAVDDAIILD) are Cytoplasmic-facing.

It belongs to the WRB/GET1 family. In terms of assembly, component of the Golgi to ER traffic (GET) complex, which is composed of GET1, GET2 and GET3. Within the complex, GET1 and GET2 form a heterotetramer which is stabilized by phosphatidylinositol binding and which binds to the GET3 homodimer.

Its subcellular location is the endoplasmic reticulum membrane. The protein localises to the golgi apparatus membrane. Functionally, required for the post-translational delivery of tail-anchored (TA) proteins to the endoplasmic reticulum. Together with GET2, acts as a membrane receptor for soluble GET3, which recognizes and selectively binds the transmembrane domain of TA proteins in the cytosol. The GET complex cooperates with the HDEL receptor ERD2 to mediate the ATP-dependent retrieval of resident ER proteins that contain a C-terminal H-D-E-L retention signal from the Golgi to the ER. The polypeptide is Golgi to ER traffic protein 1 (Saccharomyces cerevisiae (strain RM11-1a) (Baker's yeast)).